Reading from the N-terminus, the 123-residue chain is Small ribosomal subunit protein uS12 (123 aa).

Aspartate 89 bears the 3-methylthioaspartic acid mark.

Belongs to the universal ribosomal protein uS12 family. In terms of assembly, part of the 30S ribosomal subunit. Contacts proteins S8 and S17. May interact with IF1 in the 30S initiation complex.

In terms of biological role, with S4 and S5 plays an important role in translational accuracy. Functionally, interacts with and stabilizes bases of the 16S rRNA that are involved in tRNA selection in the A site and with the mRNA backbone. Located at the interface of the 30S and 50S subunits, it traverses the body of the 30S subunit contacting proteins on the other side and probably holding the rRNA structure together. The combined cluster of proteins S8, S12 and S17 appears to hold together the shoulder and platform of the 30S subunit. In Chelativorans sp. (strain BNC1), this protein is Small ribosomal subunit protein uS12.